The sequence spans 222 residues: Small ribosomal subunit protein uS3 (222 aa).

Positions 38-106 (IRKFISEKLA…NVHINIVEIK (69 aa)) constitute a KH type-2 domain.

This sequence belongs to the universal ribosomal protein uS3 family. Part of the 30S ribosomal subunit. Forms a tight complex with proteins S10 and S14.

Functionally, binds the lower part of the 30S subunit head. Binds mRNA in the 70S ribosome, positioning it for translation. The protein is Small ribosomal subunit protein uS3 of Lactobacillus gasseri (strain ATCC 33323 / DSM 20243 / BCRC 14619 / CIP 102991 / JCM 1131 / KCTC 3163 / NCIMB 11718 / NCTC 13722 / AM63).